A 141-amino-acid chain; its full sequence is Large ribosomal subunit protein uL11 (141 aa).

It belongs to the universal ribosomal protein uL11 family. Part of the ribosomal stalk of the 50S ribosomal subunit. Interacts with L10 and the large rRNA to form the base of the stalk. L10 forms an elongated spine to which L12 dimers bind in a sequential fashion forming a multimeric L10(L12)X complex. In terms of processing, one or more lysine residues are methylated.

Its function is as follows. Forms part of the ribosomal stalk which helps the ribosome interact with GTP-bound translation factors. The sequence is that of Large ribosomal subunit protein uL11 from Herpetosiphon aurantiacus (strain ATCC 23779 / DSM 785 / 114-95).